A 66-amino-acid polypeptide reads, in one-letter code: Toxin NaTx-4 (66 aa).

The LCN-type CS-alpha/beta domain occupies K1 to S64. 4 cysteine pairs are disulfide-bonded: C12/C63, C16/C39, C25/C44, and C29/C46.

The protein belongs to the long (4 C-C) scorpion toxin superfamily. Sodium channel inhibitor family. As to expression, expressed by the venom gland.

The protein resides in the secreted. Its function is as follows. Probable sodium channel inhibitor. This is Toxin NaTx-4 from Centruroides sculpturatus (Arizona bark scorpion).